The sequence spans 391 residues: Pyoverdine export membrane fusion protein PvdR (391 aa).

The signal sequence occupies residues 1–24 (MRRTRSTRRALLVAVCLSPLIALA). A coiled-coil region spans residues 108-180 (IEMLKAQLAE…QASLRSDEAE (73 aa)). Residues 263-289 (LPVPPKPLDQSNQGGGSPTSGSGGQSG) are disordered. Over residues 275-289 (QGGGSPTSGSGGQSG) the composition is skewed to gly residues.

It belongs to the membrane fusion protein (MFP) (TC 8.A.1) family. In terms of assembly, part of the tripartite efflux system PvdRT-OpmQ, which is composed of an inner membrane component with both ATPase and permease domains, PvdT, a periplasmic membrane fusion protein, PvdR, and an outer membrane component, OpmQ.

It localises to the periplasm. Functionally, part of the tripartite efflux system PvdRT-OpmQ required for the secretion into the extracellular milieu of the siderophore pyoverdine (PVD), which is involved in iron acquisition. This subunit is an adapter protein that stimulates the ATPase activity of PvdT and connects the inner and outer membrane components. The system is responsible for export of newly synthesized PVD after the final steps of biosynthesis have taken place in the periplasm. It is also responsible for recycling of PVD after internalization of ferri-PVD into the periplasm by the outer-membrane receptor FpvA and release of iron from PVD, thus making PVD available for new cycles of iron uptake. In addition, can expel unwanted metals complexed with PVD from the periplasm into the extracellular medium. Does not contribute to resistance to antibiotics belonging to the classes of tetracyclines, aminoglycosides, beta-lactams and macrolides, and chloramphenicol. This chain is Pyoverdine export membrane fusion protein PvdR, found in Pseudomonas aeruginosa (strain ATCC 15692 / DSM 22644 / CIP 104116 / JCM 14847 / LMG 12228 / 1C / PRS 101 / PAO1).